The chain runs to 1215 residues: DNA-directed RNA polymerase subunit beta' (1215 aa).

Zn(2+)-binding residues include C60, C62, C75, and C78. D450, D452, and D454 together coordinate Mg(2+). Zn(2+)-binding residues include C818, C892, C899, and C902.

This sequence belongs to the RNA polymerase beta' chain family. In terms of assembly, the RNAP catalytic core consists of 2 alpha, 1 beta, 1 beta' and 1 omega subunit. When a sigma factor is associated with the core the holoenzyme is formed, which can initiate transcription. It depends on Mg(2+) as a cofactor. Zn(2+) serves as cofactor.

It catalyses the reaction RNA(n) + a ribonucleoside 5'-triphosphate = RNA(n+1) + diphosphate. In terms of biological role, DNA-dependent RNA polymerase catalyzes the transcription of DNA into RNA using the four ribonucleoside triphosphates as substrates. This is DNA-directed RNA polymerase subunit beta' from Streptococcus sanguinis (strain SK36).